Reading from the N-terminus, the 123-residue chain is Small ribosomal subunit protein uS12 (123 aa).

Asp-90 bears the 3-methylthioaspartic acid mark.

It belongs to the universal ribosomal protein uS12 family. Part of the 30S ribosomal subunit. Contacts proteins S8 and S17. May interact with IF1 in the 30S initiation complex.

With S4 and S5 plays an important role in translational accuracy. Its function is as follows. Interacts with and stabilizes bases of the 16S rRNA that are involved in tRNA selection in the A site and with the mRNA backbone. Located at the interface of the 30S and 50S subunits, it traverses the body of the 30S subunit contacting proteins on the other side and probably holding the rRNA structure together. The combined cluster of proteins S8, S12 and S17 appears to hold together the shoulder and platform of the 30S subunit. The polypeptide is Small ribosomal subunit protein uS12 (Ehrlichia ruminantium (strain Gardel)).